A 463-amino-acid chain; its full sequence is Endoglucanase (463 aa).

Positions 1 to 27 (MVEKRKIFTVLCACGIGFTSYTSCISA) are cleaved as a signal peptide. A propeptide spanning residues 28 to 55 (AAIDNDTLINNGHKINSSIITNSSQVSA) is cleaved from the precursor. Residue Glu130 is the Proton donor of the active site. Asp191 serves as the catalytic Nucleophile.

This sequence belongs to the glycosyl hydrolase 8 (cellulase D) family. In terms of processing, the N- and the C-terminus may be subjected to proteolysis.

The catalysed reaction is Endohydrolysis of (1-&gt;4)-beta-D-glucosidic linkages in cellulose, lichenin and cereal beta-D-glucans.. The chain is Endoglucanase from Bacillus sp. (strain KSM-330).